Consider the following 886-residue polypeptide: Phosphatidylinositol 3-kinase catalytic subunit type 3 (886 aa).

A C2 PI3K-type domain is found at 35–184 (YKAVLEDPML…LAKLTKAHRQ (150 aa)). The 237-residue stretch at 283–519 (DHDLKPNAAT…PKTHEMYLNV (237 aa)) folds into the PIK helical domain. The tract at residues 414–464 (GLEPTKKDSQGPMLESMTTSGINPETDSSQILSNPLPAVSSPAPPSKTKDG) is disordered. The segment covering 429-444 (SMTTSGINPETDSSQI) has biased composition (polar residues). Residues 445–454 (LSNPLPAVSS) show a composition bias toward low complexity. Residues 604–870 (IPEKATLFKS…LIDDSVNALF (267 aa)) form the PI3K/PI4K catalytic domain. The interval 610–616 (LFKSALM) is G-loop. The catalytic loop stretch occupies residues 739–747 (GVGDRHLDN). Residues 758–779 (HIDFGYILGRDPKPLPPPMKLN) are activation loop.

Belongs to the PI3/PI4-kinase family. As to quaternary structure, component of the PI3K (PI3KC3/PI3K-III/class III phosphatidylinositol 3-kinase) complex the core of which is composed of the catalytic subunit pik3c3, the regulatory subunit pik3r4 and becn1 associating with additional regulatory/auxiliary subunits to form alternative complex forms. Mn(2+) serves as cofactor.

It is found in the midbody. The catalysed reaction is a 1,2-diacyl-sn-glycero-3-phospho-(1D-myo-inositol) + ATP = a 1,2-diacyl-sn-glycero-3-phospho-(1D-myo-inositol-3-phosphate) + ADP + H(+). Functionally, catalytic subunit of the PI3K complex that mediates formation of phosphatidylinositol 3-phosphate; different complex forms are believed to play a role in multiple membrane trafficking pathways. Involved in the transport of lysosomal enzyme precursors to lysosomes. Required for transport from early to late endosomes. This chain is Phosphatidylinositol 3-kinase catalytic subunit type 3 (pik3c3), found in Xenopus laevis (African clawed frog).